The following is a 313-amino-acid chain: Probable cell division protein WhiA (313 aa).

The segment at residues 276 to 309 is a DNA-binding region (H-T-H motif); that stretch reads SLKELGEMLHPKLGKSGVNHRLRKLDEIAERIRK.

It belongs to the WhiA family.

Functionally, involved in cell division and chromosome segregation. The chain is Probable cell division protein WhiA from Ruminiclostridium cellulolyticum (strain ATCC 35319 / DSM 5812 / JCM 6584 / H10) (Clostridium cellulolyticum).